The sequence spans 236 residues: Leucyl/phenylalanyl-tRNA--protein transferase (236 aa).

Belongs to the L/F-transferase family.

Its subcellular location is the cytoplasm. The catalysed reaction is N-terminal L-lysyl-[protein] + L-leucyl-tRNA(Leu) = N-terminal L-leucyl-L-lysyl-[protein] + tRNA(Leu) + H(+). The enzyme catalyses N-terminal L-arginyl-[protein] + L-leucyl-tRNA(Leu) = N-terminal L-leucyl-L-arginyl-[protein] + tRNA(Leu) + H(+). It catalyses the reaction L-phenylalanyl-tRNA(Phe) + an N-terminal L-alpha-aminoacyl-[protein] = an N-terminal L-phenylalanyl-L-alpha-aminoacyl-[protein] + tRNA(Phe). In terms of biological role, functions in the N-end rule pathway of protein degradation where it conjugates Leu, Phe and, less efficiently, Met from aminoacyl-tRNAs to the N-termini of proteins containing an N-terminal arginine or lysine. This Shewanella halifaxensis (strain HAW-EB4) protein is Leucyl/phenylalanyl-tRNA--protein transferase.